A 66-amino-acid chain; its full sequence is Beta-toxin Cbo4 (66 aa).

The region spanning 1–66 is the LCN-type CS-alpha/beta domain; the sequence is KEGYIVDYHT…VWPLPNKRCK (66 aa). 4 disulfide bridges follow: cysteine 12/cysteine 65, cysteine 16/cysteine 41, cysteine 25/cysteine 46, and cysteine 29/cysteine 48. At lysine 66 the chain carries Lysine amide.

It belongs to the long (4 C-C) scorpion toxin superfamily. Sodium channel inhibitor family. Beta subfamily. Expressed by the venom gland.

The protein localises to the secreted. In terms of biological role, beta toxins bind voltage-independently at site-4 of sodium channels and shift the voltage of activation toward more negative potentials thereby affecting sodium channel activation and promoting spontaneous and repetitive firing. Is active on the human voltage-gated sodium channels Nav1.4/SCN4A, Nav1.5/SCN5A and Nav1.6/SCN8A when tested at 200 nM. In vivo, is toxic to mice when intraperitoneally injected. The chain is Beta-toxin Cbo4 from Centruroides bonito (Scorpion).